Reading from the N-terminus, the 65-residue chain is U11-theraphotoxin-Cg1b (65 aa).

The first 21 residues, 1-21, serve as a signal peptide directing secretion; it reads MKTTILVVILGLTLLFALSAA. Residues 22–29 constitute a propeptide that is removed on maturation; that stretch reads TELKDEER. Intrachain disulfides connect Cys-31-Cys-45, Cys-38-Cys-50, and Cys-44-Cys-57.

The protein belongs to the neurotoxin 10 (Hwtx-1) family. 32 (Jztx-16) subfamily. As to expression, expressed by the venom gland.

It localises to the secreted. Its function is as follows. Probable ion channel inhibitor. The protein is U11-theraphotoxin-Cg1b of Chilobrachys guangxiensis (Chinese earth tiger tarantula).